The sequence spans 791 residues: Diacylglycerol kinase gamma (791 aa).

Disordered regions lie at residues 82–103 (KPRHETSDHPTEGASNSEANSA) and 117–154 (DEACAPDTESNMAEKQAPAEDQVAATPLEPPVPRSSSS). Residues 83–92 (PRHETSDHPT) are compositionally biased toward basic and acidic residues. Over residues 94–103 (GASNSEANSA) the composition is skewed to polar residues. EF-hand domains follow at residues 175-210 (RPQDKLEFMFRLYDSDENGLLDQAEMDCIVNQMLHI) and 220-255 (ELRPILKEMLQGMDYDRDGFVSLQEWVHGGMTTIPL). Positions 188, 190, 192, 199, 233, 235, 237, and 244 each coordinate Ca(2+). 2 Phorbol-ester/DAG-type zinc fingers span residues 271-321 (RHAW…IPGC) and 336-385 (QHAW…LCDG). One can recognise a DAGKc domain in the interval 430–564 (PGTHPLLVLV…LDRWHLEVIP (135 aa)). The segment at 768–791 (APMMMGPPQKSSFFSLRRKSRSKD) is disordered.

Belongs to the eukaryotic diacylglycerol kinase family. As to expression, predominantly expressed in retina and in a much lesser extent in the brain. Other tissues contain extremely low levels of DGK-gamma.

The protein localises to the membrane. Its subcellular location is the cytoplasm. It is found in the cytosol. It localises to the cytoskeleton. The enzyme catalyses a 1,2-diacyl-sn-glycerol + ATP = a 1,2-diacyl-sn-glycero-3-phosphate + ADP + H(+). The catalysed reaction is 1,2-didecanoyl-sn-glycerol + ATP = 1,2-didecanoyl-sn-glycero-3-phosphate + ADP + H(+). It catalyses the reaction 1-octadecanoyl-2-(5Z,8Z,11Z,14Z-eicosatetraenoyl)-sn-glycerol + ATP = 1-octadecanoyl-2-(5Z,8Z,11Z,14Z-eicosatetraenoyl)-sn-glycero-3-phosphate + ADP + H(+). It carries out the reaction 1,2-di-(9Z-octadecenoyl)-sn-glycerol + ATP = 1,2-di-(9Z-octadecenoyl)-sn-glycero-3-phosphate + ADP + H(+). The enzyme catalyses 1-octadecanoyl-2-(9Z,12Z)-octadecadienoyl-sn-glycerol + ATP = 1-octadecanoyl-2-(9Z,12Z-octadecadienoyl)-sn-glycero-3-phosphate + ADP + H(+). Its pathway is lipid metabolism; glycerolipid metabolism. Its activity is regulated as follows. The activity is calcium-dependent. Requires phosphatidylserine for maximal activity. Functionally, diacylglycerol kinase that converts diacylglycerol/DAG into phosphatidic acid/phosphatidate/PA and regulates the respective levels of these two bioactive lipids. Thereby, acts as a central switch between the signaling pathways activated by these second messengers with different cellular targets and opposite effects in numerous biological processes. Has no apparent specificity with regard to the acyl compositions of diacylglycerol. Specifically expressed in the cerebellum where it controls the level of diacylglycerol which in turn regulates the activity of protein kinase C gamma. Through protein kinase C gamma, indirectly regulates the dendritic development of Purkinje cells, cerebellar long term depression and ultimately cerebellar motor coordination. The polypeptide is Diacylglycerol kinase gamma (DGKG) (Homo sapiens (Human)).